A 147-amino-acid chain; its full sequence is Globin, polymeric component P2 (147 aa).

The Globin domain maps to 2 to 146 (PLTADQVAAL…ISDALVAGLE (145 aa)). Position 96 (H96) interacts with heme b.

This sequence belongs to the globin family. As to quaternary structure, polymer.

The polypeptide is Globin, polymeric component P2 (Glycera dibranchiata (Bloodworm)).